A 390-amino-acid chain; its full sequence is Zinc transporter 7 (390 aa).

Residues 1 to 37 lie on the Cytoplasmic side of the membrane; the sequence is MLPLSIKDDEYKPPKFNLVRKVSGWIRSIFSDTTSRN. A helical transmembrane segment spans residues 38–58; the sequence is LFCFLCLNLSFAFVELFYGIW. The Lumenal portion of the chain corresponds to 59–67; sequence SNSLGLISD. A helical transmembrane segment spans residues 68–88; that stretch reads SFHMFFDCTALLAGLAASVIS. The Cytoplasmic segment spans residues 89-102; the sequence is RWKTNEAFSYGYVR. The helical transmembrane segment at 103–123 threads the bilayer; the sequence is AEVLAGFVNGLFLIFTAFFIF. At 124-140 the chain is on the lumenal side; it reads SEGIERALDTPEVHHER. A helical membrane pass occupies residues 141-161; that stretch reads LLPVSILGFLVNLIGIFVFQH. The interval 161–226 is his-rich loop; sequence HGGGHGHSHE…SHDQSHKHGH (66 aa). The Cytoplasmic segment spans residues 162-250; sequence GGGHGHSHES…TGSSKQILEG (89 aa). The interval 167–243 is disordered; sequence HSHESGHGHS…DEPPEEHTGS (77 aa). Residues 177–186 show a composition bias toward low complexity; the sequence is HSLFNGSLSH. Residues 187-208 are compositionally biased toward basic residues; the sequence is GHSHSHGGSHGHSHGGGHGHSH. 2 stretches are compositionally biased toward basic and acidic residues: residues 209-222 and 232-242; these read SHGE…DQSH and CHDEPPEEHTG. The chain crosses the membrane as a helical span at residues 251-271; it reads VFLHIVADALGSVGVIISTIL. The Lumenal segment spans residues 272–276; the sequence is MQRYG. Residues 277–297 form a helical membrane-spanning segment; it reads LMIADPICSMLIALLIFVSVI. The Cytoplasmic segment spans residues 298-390; the sequence is PLLKQSIGIL…LYVQIDMAAM (93 aa).

This sequence belongs to the cation diffusion facilitator (CDF) transporter (TC 2.A.4) family. SLC30A subfamily. Homooligomer.

The protein resides in the golgi apparatus membrane. The protein localises to the cytoplasmic vesicle. It localises to the golgi apparatus. It is found in the trans-Golgi network. Its subcellular location is the sarcoplasmic reticulum. The protein resides in the mitochondrion. The enzyme catalyses Zn(2+)(in) = Zn(2+)(out). In terms of biological role, zinc ion transporter mediating zinc entry from the cytosol into the lumen of organelles along the secretory pathway. By contributing to zinc ion homeostasis within the early secretory pathway, regulates the activation and folding of enzymes like alkaline phosphatases. The chain is Zinc transporter 7 (slc30a7) from Xenopus tropicalis (Western clawed frog).